The sequence spans 307 residues: MIKVVAVVGPTAVGKTALAIKLAQAFNGEIISGDSMQVYRHLDIGTAKATAAEQAQAPHHLIDIQDVDQQFTVAQFVAAAQPLIQAIHERGHLPIVAGGTGFYLQALFDGLKLGADAPGDPQIREHLRQIAVEQGPQVLWQQLAAQDPVAASKIPPTNIRRTVRALEVIQVTGQLFSHQQNAGSQYDEYYIGLNTARPLLYERINQRVDNMVQAGLLDEVRWLAKRGGATLPAASGIGYRELLPVLDQPEKLAAAIDQIKQDSRHYAKRQLTWFRHQTTANWYDLVQHPEVDAQILQDVTAWLTEKN.

9-16 (GPTAVGKT) is an ATP binding site. A substrate-binding site is contributed by 11–16 (TAVGKT). An interaction with substrate tRNA region spans residues 34 to 37 (DSMQ).

Belongs to the IPP transferase family. As to quaternary structure, monomer. Requires Mg(2+) as cofactor.

The catalysed reaction is adenosine(37) in tRNA + dimethylallyl diphosphate = N(6)-dimethylallyladenosine(37) in tRNA + diphosphate. In terms of biological role, catalyzes the transfer of a dimethylallyl group onto the adenine at position 37 in tRNAs that read codons beginning with uridine, leading to the formation of N6-(dimethylallyl)adenosine (i(6)A). This Levilactobacillus brevis (strain ATCC 367 / BCRC 12310 / CIP 105137 / JCM 1170 / LMG 11437 / NCIMB 947 / NCTC 947) (Lactobacillus brevis) protein is tRNA dimethylallyltransferase.